An 843-amino-acid chain; its full sequence is MAVKRFYETFHPDHYDLYIDVDRAARSFSGTSTIHGEIQEETVLVHQKYMTISKVTVDGKEVPFTFGDDFEGIKIEAGKTGEAVIAIDYSAPLTDTMMGIYPSYYQVDGVKKELIGTQFETTFAREAFPCVDEPEAKATFSLALKFDEHEGETVLANMPEDRVENGVHYFKETVRMSSYLVAFAFGEMRSLTTHTKSGVLIGVYSTQAHTEKELTFSLDIAKRAIEFYEDFYQTPYPLPQSLQLALPDFSAGAMENWGLVTYREAYLLLDPDNTTLEMKKLVATVVTHELAHQWFGDLVTMEWWDNLWLNESFANMMEYLSVDHLEPNWHIWEMFQTSEAAAALTRDATDGVQSVHVEVNDPAEIDALFDGAIVYAKGSRMLVMVRSLLGDEALRKGLKRYFDKHKFGNAAGDDLWDALSTATDLNIGEIMHTWLDQPGYPVVNAFVEDGHLKLTQKQFFIGEGKEVGRKWEIPLNANFKAPKIMSDVELDLGDYQALRAEAGHALRLNVGNNSHFIVKYDQTLMDDIMKEAKDLDPVSQLQLLQDLRLLAEGKQASYADVVPVLELFKNSESHIVNDALYTTADKLRQFAPAGSEADKNLRALYNDLSKDQVARLGWLPKAGESDEDIQTRPYVLSASLYGRNADSEKQAHEIYVEYADKLAELSADIRPYVLINEVENYGSSELTDKLIGLYQATSDPSFKMDLEAAIVKSKDEGELKKIVSWFKNAEIVKPQDLRGWFSGVLSNPAGEQLAWDWIRDEWAWLEKTVGGDMEFATFITVISRVFKTKERYDEYNAFFTDKESNMLLNREIKMDRKVIANRVDLIASEQADVNAAVAAALQK.

Substrate contacts are provided by residues Glu120 and 252-256 (GAMEN). Residue His288 coordinates Zn(2+). The active-site Proton acceptor is the Glu289. Residues His292 and Glu311 each contribute to the Zn(2+) site.

It belongs to the peptidase M1 family. Monomer. Zn(2+) is required as a cofactor.

Its subcellular location is the cytoplasm. The enzyme catalyses Release of an N-terminal amino acid, Xaa-|-Yaa- from a peptide, amide or arylamide. Xaa is preferably Ala, but may be most amino acids including Pro (slow action). When a terminal hydrophobic residue is followed by a prolyl residue, the two may be released as an intact Xaa-Pro dipeptide.. Aminopeptidase with broad substrate specificity to several peptides. This Lactobacillus delbrueckii subsp. lactis protein is Aminopeptidase N (pepN).